The primary structure comprises 338 residues: Holliday junction branch migration complex subunit RuvB (338 aa).

The interval 1–181 (MEERILTQNF…FGVINRLDYY (181 aa)) is large ATPase domain (RuvB-L). ATP is bound by residues leucine 20, arginine 21, glycine 62, lysine 65, threonine 66, threonine 67, 128-130 (EDF), arginine 171, tyrosine 181, and arginine 218. Threonine 66 provides a ligand contact to Mg(2+). The small ATPAse domain (RuvB-S) stretch occupies residues 182–252 (SVEELKEIIK…TANIALNMLG (71 aa)). Residues 255-338 (EMGLEEIDRK…YVEQRRIEDV (84 aa)) form a head domain (RuvB-H) region. 2 residues coordinate DNA: arginine 310 and arginine 315.

This sequence belongs to the RuvB family. As to quaternary structure, homohexamer. Forms an RuvA(8)-RuvB(12)-Holliday junction (HJ) complex. HJ DNA is sandwiched between 2 RuvA tetramers; dsDNA enters through RuvA and exits via RuvB. An RuvB hexamer assembles on each DNA strand where it exits the tetramer. Each RuvB hexamer is contacted by two RuvA subunits (via domain III) on 2 adjacent RuvB subunits; this complex drives branch migration. In the full resolvosome a probable DNA-RuvA(4)-RuvB(12)-RuvC(2) complex forms which resolves the HJ.

The protein localises to the cytoplasm. The catalysed reaction is ATP + H2O = ADP + phosphate + H(+). The RuvA-RuvB-RuvC complex processes Holliday junction (HJ) DNA during genetic recombination and DNA repair, while the RuvA-RuvB complex plays an important role in the rescue of blocked DNA replication forks via replication fork reversal (RFR). RuvA specifically binds to HJ cruciform DNA, conferring on it an open structure. The RuvB hexamer acts as an ATP-dependent pump, pulling dsDNA into and through the RuvAB complex. RuvB forms 2 homohexamers on either side of HJ DNA bound by 1 or 2 RuvA tetramers; 4 subunits per hexamer contact DNA at a time. Coordinated motions by a converter formed by DNA-disengaged RuvB subunits stimulates ATP hydrolysis and nucleotide exchange. Immobilization of the converter enables RuvB to convert the ATP-contained energy into a lever motion, pulling 2 nucleotides of DNA out of the RuvA tetramer per ATP hydrolyzed, thus driving DNA branch migration. The RuvB motors rotate together with the DNA substrate, which together with the progressing nucleotide cycle form the mechanistic basis for DNA recombination by continuous HJ branch migration. Branch migration allows RuvC to scan DNA until it finds its consensus sequence, where it cleaves and resolves cruciform DNA. The sequence is that of Holliday junction branch migration complex subunit RuvB from Caldanaerobacter subterraneus subsp. tengcongensis (strain DSM 15242 / JCM 11007 / NBRC 100824 / MB4) (Thermoanaerobacter tengcongensis).